A 308-amino-acid chain; its full sequence is Phosphoribosylaminoimidazole-succinocarboxamide synthase (308 aa).

This sequence belongs to the SAICAR synthetase family.

It catalyses the reaction 5-amino-1-(5-phospho-D-ribosyl)imidazole-4-carboxylate + L-aspartate + ATP = (2S)-2-[5-amino-1-(5-phospho-beta-D-ribosyl)imidazole-4-carboxamido]succinate + ADP + phosphate + 2 H(+). Its pathway is purine metabolism; IMP biosynthesis via de novo pathway; 5-amino-1-(5-phospho-D-ribosyl)imidazole-4-carboxamide from 5-amino-1-(5-phospho-D-ribosyl)imidazole-4-carboxylate: step 1/2. The protein is Phosphoribosylaminoimidazole-succinocarboxamide synthase of Xylella fastidiosa (strain Temecula1 / ATCC 700964).